Here is a 347-residue protein sequence, read N- to C-terminus: Eukaryotic translation initiation factor 3 subunit H (347 aa).

The 144-residue stretch at 6-149 (VCIDSSVALK…PSSTGPQGHT (144 aa)) folds into the MPN domain. The tract at residues 136 to 155 (SDTDPSSTGPQGHTTTTPSG) is disordered. The span at 138–155 (TDPSSTGPQGHTTTTPSG) shows a compositional bias: polar residues.

It belongs to the eIF-3 subunit H family. In terms of assembly, component of the eukaryotic translation initiation factor 3 (eIF-3) complex.

The protein localises to the cytoplasm. Component of the eukaryotic translation initiation factor 3 (eIF-3) complex, which is involved in protein synthesis of a specialized repertoire of mRNAs and, together with other initiation factors, stimulates binding of mRNA and methionyl-tRNAi to the 40S ribosome. The eIF-3 complex specifically targets and initiates translation of a subset of mRNAs involved in cell proliferation. This Yarrowia lipolytica (strain CLIB 122 / E 150) (Yeast) protein is Eukaryotic translation initiation factor 3 subunit H.